The primary structure comprises 95 residues: Synaptobrevin-A (95 aa).

Residues 1-70 lie on the Cytoplasmic side of the membrane; sequence MSEPVNKVKQ…KRLMWCRNIK (70 aa). Positions 7–67 constitute a v-SNARE coiled-coil homology domain; it reads KVKQTQQQVD…NEIKRLMWCR (61 aa). The helical; Anchor for type IV membrane protein transmembrane segment at 71–91 threads the bilayer; sequence LTLIIIAVVVLLLVVIIVPIV. The Vesicular portion of the chain corresponds to 92–95; the sequence is LKFT.

The protein belongs to the synaptobrevin family.

It is found in the cytoplasmic vesicle. The protein localises to the secretory vesicle membrane. Involved in the targeting and/or fusion of transport vesicles to their target membrane. This Dictyostelium discoideum (Social amoeba) protein is Synaptobrevin-A (sybA).